The sequence spans 230 residues: Potassium/proton antiporter CemA (230 aa).

The next 4 membrane-spanning stretches (helical) occupy residues 7-27 (LPSL…SSSF), 107-127 (ILHF…FFLG), 145-165 (LNDS…VGFH), and 181-201 (FGWA…PVIL).

Belongs to the CemA family.

The protein resides in the plastid. Its subcellular location is the chloroplast inner membrane. It catalyses the reaction K(+)(in) + H(+)(out) = K(+)(out) + H(+)(in). In terms of biological role, contributes to K(+)/H(+) antiport activity by supporting proton efflux to control proton extrusion and homeostasis in chloroplasts in a light-dependent manner to modulate photosynthesis. Prevents excessive induction of non-photochemical quenching (NPQ) under continuous-light conditions. Indirectly promotes efficient inorganic carbon uptake into chloroplasts. The polypeptide is Potassium/proton antiporter CemA (Triticum aestivum (Wheat)).